Consider the following 411-residue polypeptide: Glutamate dehydrogenase 2, mitochondrial (411 aa).

Residues 1–18 constitute a mitochondrion transit peptide; the sequence is MNALAATSRNFRQAARLL. Lys-102 is an active-site residue.

It belongs to the Glu/Leu/Phe/Val dehydrogenases family. As to expression, expressed in roots. Expressed ubiquitously in various tissues.

Its subcellular location is the mitochondrion. The catalysed reaction is L-glutamate + NAD(+) + H2O = 2-oxoglutarate + NH4(+) + NADH + H(+). It carries out the reaction L-glutamate + NADP(+) + H2O = 2-oxoglutarate + NH4(+) + NADPH + H(+). This Oryza sativa subsp. japonica (Rice) protein is Glutamate dehydrogenase 2, mitochondrial (GDH2).